A 320-amino-acid chain; its full sequence is Putative HTH-type transcriptional regulatory protein VNG_2112C (320 aa).

The HTH cro/C1-type domain occupies 132–189 (LADRREDERLSLGQLASELGVSRRTVSKYEDGMNASIEVAMRLEDLFGGELTAPVDVM). Residues 143-162 (LGQLASELGVSRRTVSKYED) constitute a DNA-binding region (H-T-H motif).

This Halobacterium salinarum (strain ATCC 700922 / JCM 11081 / NRC-1) (Halobacterium halobium) protein is Putative HTH-type transcriptional regulatory protein VNG_2112C.